The sequence spans 449 residues: Tubulin alpha chain (449 aa).

Residues 1 to 4 carry the MREC motif motif; that stretch reads MREC. Gln11 provides a ligand contact to GTP. Position 40 is an N6-acetyllysine (Lys40). Residues Glu71, Ser140, Gly144, Thr145, Thr179, Asn206, and Asn228 each coordinate GTP. A Mg(2+)-binding site is contributed by Glu71. Glu254 is a catalytic residue. The interval 430 to 449 is disordered; that stretch reads KDYEEVGADSADAEDEGEEY. The span at 431–449 shows a compositional bias: acidic residues; that stretch reads DYEEVGADSADAEDEGEEY.

Belongs to the tubulin family. In terms of assembly, dimer of alpha and beta chains. A typical microtubule is a hollow water-filled tube with an outer diameter of 25 nm and an inner diameter of 15 nM. Alpha-beta heterodimers associate head-to-tail to form protofilaments running lengthwise along the microtubule wall with the beta-tubulin subunit facing the microtubule plus end conferring a structural polarity. Microtubules usually have 13 protofilaments but different protofilament numbers can be found in some organisms and specialized cells. Requires Mg(2+) as cofactor. Some glutamate residues at the C-terminus are polyglycylated, resulting in polyglycine chains on the gamma-carboxyl group. Glycylation is mainly limited to tubulin incorporated into axonemes (cilia and flagella) whereas glutamylation is prevalent in neuronal cells, centrioles, axonemes, and the mitotic spindle. Both modifications can coexist on the same protein on adjacent residues, and lowering polyglycylation levels increases polyglutamylation, and reciprocally. The precise function of polyglycylation is still unclear. In terms of processing, some glutamate residues at the C-terminus are polyglutamylated, resulting in polyglutamate chains on the gamma-carboxyl group. Polyglutamylation plays a key role in microtubule severing by spastin (SPAST). SPAST preferentially recognizes and acts on microtubules decorated with short polyglutamate tails: severing activity by SPAST increases as the number of glutamates per tubulin rises from one to eight, but decreases beyond this glutamylation threshold. Post-translationally, acetylation of alpha chains at Lys-40 is located inside the microtubule lumen. This modification has been correlated with increased microtubule stability, intracellular transport and ciliary assembly. Undergoes a tyrosination/detyrosination cycle, the cyclic removal and re-addition of a C-terminal tyrosine residue by the enzymes tubulin tyrosine carboxypeptidase (MATCAP1, VASH1 or VASH2) and tubulin tyrosine ligase (TTL), respectively. In terms of processing, tyrosination promotes microtubule interaction with CAP-Gly microtubule plus-end tracking proteins. Tyrosinated tubulins regulate the initiation of dynein-driven motility. Post-translationally, detyrosination is involved in metaphase plate congression by guiding chromosomes during mitosis. Detyrosination increases microtubules-dependent mechanotransduction in dystrophic cardiac and skeletal muscle. In cardiomyocytes, detyrosinated microtubules are required to resist to contractile compression during contraction.

It localises to the cytoplasm. It is found in the cytoskeleton. The catalysed reaction is GTP + H2O = GDP + phosphate + H(+). Functionally, tubulin is the major constituent of microtubules, a cylinder consisting of laterally associated linear protofilaments composed of alpha- and beta-tubulin heterodimers. Microtubules grow by the addition of GTP-tubulin dimers to the microtubule end, where a stabilizing cap forms. Below the cap, tubulin dimers are in GDP-bound state, owing to GTPase activity of alpha-tubulin. This is Tubulin alpha chain (tuba) from Xenopus laevis (African clawed frog).